Here is a 375-residue protein sequence, read N- to C-terminus: tRNA-specific 2-thiouridylase MnmA (375 aa).

ATP is bound by residues 18-25 (GMSGGVDS) and methionine 44. The segment at 104 to 106 (NPD) is interaction with target base in tRNA. Residue cysteine 109 is the Nucleophile of the active site. A disulfide bond links cysteine 109 and cysteine 206. Residue glycine 134 participates in ATP binding. An interaction with tRNA region spans residues 156–158 (KDQ). Residue cysteine 206 is the Cysteine persulfide intermediate of the active site. The interval 318-319 (RY) is interaction with tRNA.

This sequence belongs to the MnmA/TRMU family.

It is found in the cytoplasm. It catalyses the reaction S-sulfanyl-L-cysteinyl-[protein] + uridine(34) in tRNA + AH2 + ATP = 2-thiouridine(34) in tRNA + L-cysteinyl-[protein] + A + AMP + diphosphate + H(+). Functionally, catalyzes the 2-thiolation of uridine at the wobble position (U34) of tRNA, leading to the formation of s(2)U34. The chain is tRNA-specific 2-thiouridylase MnmA from Colwellia psychrerythraea (strain 34H / ATCC BAA-681) (Vibrio psychroerythus).